We begin with the raw amino-acid sequence, 208 residues long: Ribonuclease HII (208 aa).

The region spanning 1 to 205 is the RNase H type-2 domain; it reads MIVVGIDEAG…LQEIAPNYYI (205 aa). Asp7, Glu8, and Asp104 together coordinate a divalent metal cation.

It belongs to the RNase HII family. Mn(2+) serves as cofactor. It depends on Mg(2+) as a cofactor.

Its subcellular location is the cytoplasm. It catalyses the reaction Endonucleolytic cleavage to 5'-phosphomonoester.. In terms of biological role, endonuclease that specifically degrades the RNA of RNA-DNA hybrids. The protein is Ribonuclease HII of Sulfurisphaera tokodaii (strain DSM 16993 / JCM 10545 / NBRC 100140 / 7) (Sulfolobus tokodaii).